A 341-amino-acid chain; its full sequence is MCSPSTSDVRFITFVNTTYIEAEGLEAIFDLLLKIEVGFLVFSWIEFLYLFYLFIFIRSMHFNLTFLFMNYGGQYFCSMLSRCIIVYQQLGNDPNNDLHNWILVANFARTVCLFIAMYILPIFMIERCLASFFVKNYEKSRKIWVSLMILSIFHPLVFASAIAYIQCWIPVVVHVISFFIVNIIGYIGIHICYSYNIKKHRKFYSPQCISRVTYGLSERFQLAENIKMCKVLKKVQISILFFNIGCCSILLMDHFQVKMMIIYWSYVCFNFFALVYGITVPIILYSALPEWQKETRRLLNLCIGRRNVGEEPKSTFGEQMIYNDHAIESNIYFTQFNKTTH.

A run of 7 helical transmembrane segments spans residues 37–57, 64–86, 101–123, 143–163, 169–189, 235–255, and 264–284; these read VGFL…FIFI, LTFL…CIIV, WILV…LPIF, IWVS…SAIA, IPVV…YIGI, VQIS…MDHF, and WSYV…PIIL.

This sequence belongs to the nematode receptor-like protein sre family.

Its subcellular location is the membrane. The polypeptide is Serpentine receptor class epsilon-8 (sre-8) (Caenorhabditis elegans).